The following is a 479-amino-acid chain: Adenosylhomocysteinase (479 aa).

Substrate-binding residues include Thr-56, Asp-133, and Glu-199. Position 200 to 202 (200 to 202) interacts with NAD(+); it reads TTT. Residues Lys-229 and Asp-233 each coordinate substrate. Residues Asn-234, 263–268, Glu-286, Asn-321, 342–344, and Asn-390 each bind NAD(+); these read GYGDVG and IGH.

It belongs to the adenosylhomocysteinase family. As to quaternary structure, homotetramer. NAD(+) is required as a cofactor.

It catalyses the reaction S-adenosyl-L-homocysteine + H2O = L-homocysteine + adenosine. The protein operates within amino-acid biosynthesis; L-homocysteine biosynthesis; L-homocysteine from S-adenosyl-L-homocysteine: step 1/1. Its function is as follows. Adenosylhomocysteine is a competitive inhibitor of S-adenosyl-L-methionine-dependent methyl transferase reactions; therefore adenosylhomocysteinase may play a key role in the control of methylations via regulation of the intracellular concentration of adenosylhomocysteine. This is Adenosylhomocysteinase from Plasmodium chabaudi chabaudi.